A 373-amino-acid polypeptide reads, in one-letter code: 4-hydroxy-3-methylbut-2-en-1-yl diphosphate synthase (flavodoxin) (373 aa).

4 residues coordinate [4Fe-4S] cluster: Cys-270, Cys-273, Cys-305, and Glu-312.

Belongs to the IspG family. [4Fe-4S] cluster serves as cofactor.

The catalysed reaction is (2E)-4-hydroxy-3-methylbut-2-enyl diphosphate + oxidized [flavodoxin] + H2O + 2 H(+) = 2-C-methyl-D-erythritol 2,4-cyclic diphosphate + reduced [flavodoxin]. It participates in isoprenoid biosynthesis; isopentenyl diphosphate biosynthesis via DXP pathway; isopentenyl diphosphate from 1-deoxy-D-xylulose 5-phosphate: step 5/6. Functionally, converts 2C-methyl-D-erythritol 2,4-cyclodiphosphate (ME-2,4cPP) into 1-hydroxy-2-methyl-2-(E)-butenyl 4-diphosphate. This Photobacterium profundum (strain SS9) protein is 4-hydroxy-3-methylbut-2-en-1-yl diphosphate synthase (flavodoxin).